Here is a 237-residue protein sequence, read N- to C-terminus: Exosome complex component Rrp4 (237 aa).

Residues 72–144 (GHIVVGKVVD…LSKDPVLTIK (73 aa)) form the S1 motif domain. The 60-residue stretch at 152 to 211 (PRGTLVEIPPQKVPRVIGRRGSMVSMIEDLLGVKLIVGQNGRIVVVGDDPQRVEIAVLAV) folds into the KH domain.

This sequence belongs to the RRP4 family. As to quaternary structure, component of the archaeal exosome complex. Forms a trimer of Rrp4 and/or Csl4 subunits. The trimer associates with a hexameric ring-like arrangement composed of 3 Rrp41-Rrp42 heterodimers.

The protein localises to the cytoplasm. Its function is as follows. Non-catalytic component of the exosome, which is a complex involved in RNA degradation. Increases the RNA binding and the efficiency of RNA degradation. Confers strong poly(A) specificity to the exosome. The polypeptide is Exosome complex component Rrp4 (Thermofilum pendens (strain DSM 2475 / Hrk 5)).